We begin with the raw amino-acid sequence, 59 residues long: Arabinogalactan protein 13 (59 aa).

The signal sequence occupies residues 1-27 (MEAMKMRLFVAVLVAAMAFSAVQQAAA). Residues Pro31, Pro33, and Pro35 each carry the 4-hydroxyproline modification. O-linked (Ara...) hydroxyproline glycans are attached at residues Pro31, Pro33, and Pro35. The GPI-anchor amidated serine moiety is linked to residue Ser37. Positions 38-59 (DASLAIPAFFASVATLAFGFLF) are cleaved as a propeptide — removed in mature form.

The protein belongs to the AG-peptide AGP family. Post-translationally, contains 4-hydroxyproline; hydroxylated on Pro-31, Pro-33 and Pro-35. O-glycosylated on hydroxyprolines; noncontiguous hydroxylproline residues are glycosylated with arabinogalactan.

The protein resides in the cell membrane. Its function is as follows. Proteoglycan that seems to be implicated in diverse developmental roles such as differentiation, cell-cell recognition, embryogenesis and programmed cell death. The chain is Arabinogalactan protein 13 from Arabidopsis thaliana (Mouse-ear cress).